Here is a 950-residue protein sequence, read N- to C-terminus: Protocadherin alpha-6 (950 aa).

Positions 1–29 are cleaved as a signal peptide; that stretch reads MVFTPEDRLGKQCLLLPLLLLAAWKVGSG. At 30–697 the chain is on the extracellular side; the sequence is QLHYSVPEEA…GPEAALVDVN (668 aa). 6 Cadherin domains span residues 34–133, 157–242, 243–350, 351–455, 456–565, and 581–678; these read SVPE…PPLF, ASDA…APTF, EQSE…VPEI, ALTS…APAF, AQPE…APAL, and VPRS…APKA. N257, N265, N386, and N548 each carry an N-linked (GlcNAc...) asparagine glycan. The helical transmembrane segment at 698-718 threads the bilayer; the sequence is VYLIIAICAVSSLLVLTLLLY. Residues 719 to 950 lie on the Cytoplasmic side of the membrane; sequence TALRCSAPPT…GNSTTDNSDQ (232 aa). 4 PXXP repeats span residues 799-802, 832-835, 873-876, and 891-894; these read PRQP, PGGP, PGNP, and PGSP. The segment at 799–894 is 4 X 4 AA repeats of P-X-X-P; it reads PRQPNPDWRY…PDKFIIPGSP (96 aa). The segment at 830-950 is disordered; that stretch reads AGPGGPDQQW…GNSTTDNSDQ (121 aa). The segment covering 909 to 923 has biased composition (basic and acidic residues); sequence DKSDFITFGKKEETK.

It is found in the cell membrane. Its subcellular location is the secreted. Its function is as follows. Potential calcium-dependent cell-adhesion protein. May be involved in the establishment and maintenance of specific neuronal connections in the brain. This Homo sapiens (Human) protein is Protocadherin alpha-6 (PCDHA6).